Here is an 845-residue protein sequence, read N- to C-terminus: U-box domain-containing protein 52 (845 aa).

Disordered stretches follow at residues 180 to 210 (RPSE…LPPE) and 229 to 258 (SPAL…EVST). Positions 187 to 204 (SGSIRFERSSSTSGSTDS) are enriched in low complexity. The span at 236–251 (MGSNAVAQMDTSSSGT) shows a compositional bias: polar residues. Residues 351-468 (SITDNQVNLN…REKDKLQASL (118 aa)) adopt a coiled-coil conformation. One can recognise a Protein kinase domain in the interval 490 to 754 (FAENLKIGIG…DLKDQIIPAL (265 aa)). ATP contacts are provided by residues 496–504 (IGIGAYGSV) and K517. D612 (proton acceptor) is an active-site residue. One can recognise a U-box domain in the interval 774-845 (GPPSHFICPL…AIMEWKSNKR (72 aa)).

Belongs to the protein kinase superfamily. Ser/Thr protein kinase family.

It catalyses the reaction L-seryl-[protein] + ATP = O-phospho-L-seryl-[protein] + ADP + H(+). It carries out the reaction L-threonyl-[protein] + ATP = O-phospho-L-threonyl-[protein] + ADP + H(+). The catalysed reaction is S-ubiquitinyl-[E2 ubiquitin-conjugating enzyme]-L-cysteine + [acceptor protein]-L-lysine = [E2 ubiquitin-conjugating enzyme]-L-cysteine + N(6)-ubiquitinyl-[acceptor protein]-L-lysine.. The protein operates within protein modification; protein ubiquitination. Its function is as follows. Functions as an E3 ubiquitin ligase. The sequence is that of U-box domain-containing protein 52 (PUB52) from Arabidopsis thaliana (Mouse-ear cress).